Reading from the N-terminus, the 196-residue chain is Ribosome maturation factor RimP (196 aa).

Residues 131 to 145 (KKKAGKKSQGKKAGK) are compositionally biased toward basic residues. The disordered stretch occupies residues 131–153 (KKKAGKKSQGKKAGKKTPQAPVQ).

The protein belongs to the RimP family.

It localises to the cytoplasm. Functionally, required for maturation of 30S ribosomal subunits. The chain is Ribosome maturation factor RimP from Corynebacterium urealyticum (strain ATCC 43042 / DSM 7109).